We begin with the raw amino-acid sequence, 306 residues long: 4-diphosphocytidyl-2-C-methyl-D-erythritol kinase (306 aa).

Lys-23 is a catalytic residue. 108–118 (PIAAGIGGGSA) is a binding site for ATP. Asp-150 is an active-site residue.

This sequence belongs to the GHMP kinase family. IspE subfamily.

The enzyme catalyses 4-CDP-2-C-methyl-D-erythritol + ATP = 4-CDP-2-C-methyl-D-erythritol 2-phosphate + ADP + H(+). The protein operates within isoprenoid biosynthesis; isopentenyl diphosphate biosynthesis via DXP pathway; isopentenyl diphosphate from 1-deoxy-D-xylulose 5-phosphate: step 3/6. Its function is as follows. Catalyzes the phosphorylation of the position 2 hydroxy group of 4-diphosphocytidyl-2C-methyl-D-erythritol. In Rhodopseudomonas palustris (strain BisB18), this protein is 4-diphosphocytidyl-2-C-methyl-D-erythritol kinase.